Consider the following 130-residue polypeptide: Small ribosomal subunit protein uS9 (130 aa).

Belongs to the universal ribosomal protein uS9 family.

In Pseudoalteromonas atlantica (strain T6c / ATCC BAA-1087), this protein is Small ribosomal subunit protein uS9.